The following is a 316-amino-acid chain: 4-amino-5-hydroxymethyl-2-methylpyrimidine phosphate synthase (316 aa).

Lysine 66 is subject to N6-(pyridoxal phosphate)lysine. The active site involves histidine 70. A pyridoxal 5'-phosphate-binding site is contributed by 118–121 (GEFG). The short motif at 191–195 (CCCFC) is the CCCFC; essential for catalytic activity, may be the site of iron coordination element.

Belongs to the NMT1/THI5 family. As to quaternary structure, homodimer. It depends on Fe cation as a cofactor.

The enzyme catalyses N(6)-(pyridoxal phosphate)-L-lysyl-[4-amino-5-hydroxymethyl-2-methylpyrimidine phosphate synthase] + L-histidyl-[4-amino-5-hydroxymethyl-2-methylpyrimidine phosphate synthase] + 2 Fe(3+) + 4 H2O = L-lysyl-[4-amino-5-hydroxymethyl-2-methylpyrimidine phosphate synthase] + (2S)-2-amino-5-hydroxy-4-oxopentanoyl-[4-amino-5-hydroxymethyl-2-methylpyrimidine phosphate synthase] + 4-amino-2-methyl-5-(phosphooxymethyl)pyrimidine + 3-oxopropanoate + 2 Fe(2+) + 2 H(+). It participates in cofactor biosynthesis; thiamine diphosphate biosynthesis. In terms of biological role, responsible for the formation of the pyrimidine heterocycle in the thiamine biosynthesis pathway. Catalyzes the formation of hydroxymethylpyrimidine phosphate (HMP-P) from histidine and pyridoxal phosphate (PLP). The protein uses PLP and the active site histidine to form HMP-P, generating an inactive enzyme. The enzyme can only undergo a single turnover, which suggests it is a suicide enzyme. This Legionella pneumophila subsp. pneumophila (strain Philadelphia 1 / ATCC 33152 / DSM 7513) protein is 4-amino-5-hydroxymethyl-2-methylpyrimidine phosphate synthase.